Here is a 270-residue protein sequence, read N- to C-terminus: tRNA pseudouridine synthase A (270 aa).

The active-site Nucleophile is Asp-52. Tyr-110 contacts substrate.

It belongs to the tRNA pseudouridine synthase TruA family. In terms of assembly, homodimer.

It catalyses the reaction uridine(38/39/40) in tRNA = pseudouridine(38/39/40) in tRNA. Functionally, formation of pseudouridine at positions 38, 39 and 40 in the anticodon stem and loop of transfer RNAs. In Paraburkholderia xenovorans (strain LB400), this protein is tRNA pseudouridine synthase A.